The following is a 550-amino-acid chain: Spermatogenesis-associated protein 2 (550 aa).

One can recognise a PUB domain in the interval 83-156 (TVGTAFATLE…YNVRDHPGGA (74 aa)). Positions 320 to 337 (YHLSSLDEVDLYTERGLG) match the PIM motif motif. The interval 457-480 (SKPVGSGPSPVGSLVSSGSSSSGG) is disordered.

Belongs to the SPATA2 family.

It is found in the cytoplasm. The protein localises to the nucleus. Bridging factor that mediates the recruitment of cyld to the LUBAC complex, thereby regulating TNF-alpha-induced necroptosis. Required to activate the 'Met-1'- (linear) and 'Lys-63'-linked deubiquitinase activities of cyld. The chain is Spermatogenesis-associated protein 2 from Danio rerio (Zebrafish).